The primary structure comprises 284 residues: Release factor glutamine methyltransferase (284 aa).

Residues 123–127 (GTGTG), Asp-146, Trp-174, and Asn-189 contribute to the S-adenosyl-L-methionine site. 189–192 (NPPY) provides a ligand contact to substrate.

The protein belongs to the protein N5-glutamine methyltransferase family. PrmC subfamily.

The enzyme catalyses L-glutaminyl-[peptide chain release factor] + S-adenosyl-L-methionine = N(5)-methyl-L-glutaminyl-[peptide chain release factor] + S-adenosyl-L-homocysteine + H(+). Methylates the class 1 translation termination release factors RF1/PrfA and RF2/PrfB on the glutamine residue of the universally conserved GGQ motif. The chain is Release factor glutamine methyltransferase from Francisella tularensis subsp. tularensis (strain SCHU S4 / Schu 4).